Reading from the N-terminus, the 745-residue chain is Polyribonucleotide nucleotidyltransferase (745 aa).

Residues Asp487 and Asp493 each coordinate Mg(2+). Residues 554–613 (PRIETMQIPTDKIRDVIGTGGKIIREIVEKTGAKINIEDTGVVKIASSDGKAIKAAYNWI) form the KH domain. The region spanning 623–691 (GTIYDGTIVK…ERGKIRLSMK (69 aa)) is the S1 motif domain. Residues 695–745 (QETGEDITEKLKAERAERGEPEREERSDRGDRGDRGPRRDRGERRRESSGE) are disordered. The segment covering 701 to 745 (ITEKLKAERAERGEPEREERSDRGDRGDRGPRRDRGERRRESSGE) has biased composition (basic and acidic residues).

It belongs to the polyribonucleotide nucleotidyltransferase family. Mg(2+) is required as a cofactor.

Its subcellular location is the cytoplasm. The catalysed reaction is RNA(n+1) + phosphate = RNA(n) + a ribonucleoside 5'-diphosphate. Involved in mRNA degradation. Catalyzes the phosphorolysis of single-stranded polyribonucleotides processively in the 3'- to 5'-direction. The polypeptide is Polyribonucleotide nucleotidyltransferase (Methylorubrum populi (strain ATCC BAA-705 / NCIMB 13946 / BJ001) (Methylobacterium populi)).